The chain runs to 307 residues: 4-hydroxy-3-methylbut-2-enyl diphosphate reductase (307 aa).

C12 provides a ligand contact to [4Fe-4S] cluster. (2E)-4-hydroxy-3-methylbut-2-enyl diphosphate is bound by residues H41 and H74. Positions 41 and 74 each coordinate dimethylallyl diphosphate. Positions 41 and 74 each coordinate isopentenyl diphosphate. [4Fe-4S] cluster is bound at residue C96. H124 is a binding site for (2E)-4-hydroxy-3-methylbut-2-enyl diphosphate. H124 provides a ligand contact to dimethylallyl diphosphate. An isopentenyl diphosphate-binding site is contributed by H124. E126 functions as the Proton donor in the catalytic mechanism. T165 is a (2E)-4-hydroxy-3-methylbut-2-enyl diphosphate binding site. [4Fe-4S] cluster is bound at residue C195. The (2E)-4-hydroxy-3-methylbut-2-enyl diphosphate site is built by S223, S224, N225, and S267. Residues S223, S224, N225, and S267 each contribute to the dimethylallyl diphosphate site. Positions 223, 224, 225, and 267 each coordinate isopentenyl diphosphate.

Belongs to the IspH family. It depends on [4Fe-4S] cluster as a cofactor.

It carries out the reaction isopentenyl diphosphate + 2 oxidized [2Fe-2S]-[ferredoxin] + H2O = (2E)-4-hydroxy-3-methylbut-2-enyl diphosphate + 2 reduced [2Fe-2S]-[ferredoxin] + 2 H(+). The catalysed reaction is dimethylallyl diphosphate + 2 oxidized [2Fe-2S]-[ferredoxin] + H2O = (2E)-4-hydroxy-3-methylbut-2-enyl diphosphate + 2 reduced [2Fe-2S]-[ferredoxin] + 2 H(+). It participates in isoprenoid biosynthesis; dimethylallyl diphosphate biosynthesis; dimethylallyl diphosphate from (2E)-4-hydroxy-3-methylbutenyl diphosphate: step 1/1. The protein operates within isoprenoid biosynthesis; isopentenyl diphosphate biosynthesis via DXP pathway; isopentenyl diphosphate from 1-deoxy-D-xylulose 5-phosphate: step 6/6. In terms of biological role, catalyzes the conversion of 1-hydroxy-2-methyl-2-(E)-butenyl 4-diphosphate (HMBPP) into a mixture of isopentenyl diphosphate (IPP) and dimethylallyl diphosphate (DMAPP). Acts in the terminal step of the DOXP/MEP pathway for isoprenoid precursor biosynthesis. The protein is 4-hydroxy-3-methylbut-2-enyl diphosphate reductase of Magnetococcus marinus (strain ATCC BAA-1437 / JCM 17883 / MC-1).